The chain runs to 125 residues: Holo-[acyl-carrier-protein] synthase (125 aa).

Asp-8 and Glu-57 together coordinate Mg(2+).

The protein belongs to the P-Pant transferase superfamily. AcpS family. Mg(2+) is required as a cofactor.

It localises to the cytoplasm. It carries out the reaction apo-[ACP] + CoA = holo-[ACP] + adenosine 3',5'-bisphosphate + H(+). In terms of biological role, transfers the 4'-phosphopantetheine moiety from coenzyme A to a Ser of acyl-carrier-protein. The polypeptide is Holo-[acyl-carrier-protein] synthase (Geobacter sp. (strain M21)).